Consider the following 316-residue polypeptide: tRNA dimethylallyltransferase (316 aa).

13–20 (GPTAVGKT) provides a ligand contact to ATP. 15–20 (TAVGKT) serves as a coordination point for substrate. Residues 38–41 (DSIQ) form an interaction with substrate tRNA region.

The protein belongs to the IPP transferase family. In terms of assembly, monomer. Mg(2+) serves as cofactor.

It carries out the reaction adenosine(37) in tRNA + dimethylallyl diphosphate = N(6)-dimethylallyladenosine(37) in tRNA + diphosphate. In terms of biological role, catalyzes the transfer of a dimethylallyl group onto the adenine at position 37 in tRNAs that read codons beginning with uridine, leading to the formation of N6-(dimethylallyl)adenosine (i(6)A). This Staphylococcus carnosus (strain TM300) protein is tRNA dimethylallyltransferase.